Reading from the N-terminus, the 257-residue chain is Insulin-induced gene 1 protein (257 aa).

The Cytoplasmic segment spans residues 1–64 (MPRLHDHVWS…ARPGSWHHDL (64 aa)). The interval 32–54 (CPQGSGAPEPAPRSPRAGTAGCG) is disordered. The chain crosses the membrane as a helical span at residues 65–87 (VQRSLVLFSFGVVLALVLNLLQI). The Extracellular segment spans residues 88–106 (QRNVTLFPDEVIATIFSSA). Residues 107-124 (WWVPPCCGTAAAVVGLLY) form a helical membrane-spanning segment. At 125–139 (PCIDSHLGEPHKFKR) the chain is on the cytoplasmic side. Residues Lys-136 and Lys-138 each participate in a glycyl lysine isopeptide (Lys-Gly) (interchain with G-Cter in ubiquitin) cross-link. The helical transmembrane segment at 140 to 162 (EWASVMRCIAVFVGINHASAKLD) threads the bilayer. At 163–165 (FAN) the chain is on the extracellular side. A helical membrane pass occupies residues 166-184 (NVQLSLTLAALSLGLWWTF). The Cytoplasmic portion of the chain corresponds to 185–189 (DRSRS). Ser-187 bears the Phosphoserine mark. Residues 190–211 (GLGLGITIAFLATLITQFLVYN) form a helical membrane-spanning segment. The Extracellular segment spans residues 212–225 (GVYQYTSPDFLYIR). A helical transmembrane segment spans residues 226–243 (SWLPCIFFSGGVTVGNIG). The Cytoplasmic portion of the chain corresponds to 244 to 257 (RQLAMGVPEKPHSD). Residues 251–257 (PEKPHSD) carry the KxHxx motif.

The protein belongs to the INSIG family. Interacts with SCAP; interaction is direct and only takes place in the presence of sterols; it prevents interaction between SCAP and the coat protein complex II (COPII). Associates with the SCAP-SREBP complex (composed of SCAP and SREBF1/SREBP1 or SREBF2/SREBP2); association is mediated via its interaction with SCAP and only takes place in the presence of sterols. Interaction with SCAP is mutually exclusive with PAQR3. Interacts with HMGCR (via its SSD); the interaction, accelerated by sterols, leads to the recruitment of HMGCR to AMFR/gp78 for its ubiquitination by the sterol-mediated ERAD pathway. Interacts with AMFR/gp78 (via its membrane domain); the interaction recruits HMCR at the ER membrane for its ubiquitination and degradation by the sterol-mediated ERAD pathway. Interacts with SOAT2/ACAT2; leading to promote recruitment of AMFR/gp78 and subsequent ubiquitination of SOAT2/ACAT2. Interacts with RNF139. Interacts with RNF145. In terms of processing, phosphorylation at Ser-187 by PCK1 reduces binding to oxysterol, disrupting the interaction between INSIG1 and SCAP, thereby promoting nuclear translocation of SREBP proteins (SREBF1/SREBP1 or SREBF2/SREBP2) and subsequent transcription of downstream lipogenesis-related genes. Ubiquitinated by AMFR/gp78 in response to sterol deprivation, leading to its degradation: when the SCAP-SREBP complex becomes dissociated from INSIG1, INSIG1 is then ubiquitinated and degraded in proteasomes. Although ubiquitination is required for rapid INSIG1 degradation, it is not required for release of the SCAP-SREBP complex. Ubiquitinated by RNF139.

The protein localises to the endoplasmic reticulum membrane. In terms of biological role, oxysterol-binding protein that mediates feedback control of cholesterol synthesis by controlling both endoplasmic reticulum to Golgi transport of SCAP and degradation of HMGCR. Acts as a negative regulator of cholesterol biosynthesis by mediating the retention of the SCAP-SREBP complex in the endoplasmic reticulum, thereby blocking the processing of sterol regulatory element-binding proteins (SREBPs) SREBF1/SREBP1 and SREBF2/SREBP2. Binds oxysterol, including 25-hydroxycholesterol, regulating interaction with SCAP and retention of the SCAP-SREBP complex in the endoplasmic reticulum. In presence of oxysterol, interacts with SCAP, retaining the SCAP-SREBP complex in the endoplasmic reticulum, thereby preventing SCAP from escorting SREBF1/SREBP1 and SREBF2/SREBP2 to the Golgi. Sterol deprivation or phosphorylation by PCK1 reduce oxysterol-binding, disrupting the interaction between INSIG1 and SCAP, thereby promoting Golgi transport of the SCAP-SREBP complex, followed by processing and nuclear translocation of SREBF1/SREBP1 and SREBF2/SREBP2. Also regulates cholesterol synthesis by regulating degradation of HMGCR: initiates the sterol-mediated ubiquitin-mediated endoplasmic reticulum-associated degradation (ERAD) of HMGCR via recruitment of the reductase to the ubiquitin ligases AMFR/gp78 and/or RNF139. Also regulates degradation of SOAT2/ACAT2 when the lipid levels are low: initiates the ubiquitin-mediated degradation of SOAT2/ACAT2 via recruitment of the ubiquitin ligases AMFR/gp78. The polypeptide is Insulin-induced gene 1 protein (Cricetulus griseus (Chinese hamster)).